A 242-amino-acid polypeptide reads, in one-letter code: Probable transcriptional regulatory protein Bamb_2332 (242 aa).

The protein belongs to the TACO1 family.

Its subcellular location is the cytoplasm. The sequence is that of Probable transcriptional regulatory protein Bamb_2332 from Burkholderia ambifaria (strain ATCC BAA-244 / DSM 16087 / CCUG 44356 / LMG 19182 / AMMD) (Burkholderia cepacia (strain AMMD)).